The chain runs to 148 residues: UPF0756 membrane protein NMC1845 (148 aa).

4 helical membrane-spanning segments follow: residues 13-35 (LILL…LLLM), 50-70 (HGLN…LVSG), 80-100 (FLNF…WLAG), and 121-141 (VIGV…AGIL).

Belongs to the UPF0756 family.

The protein localises to the cell membrane. This is UPF0756 membrane protein NMC1845 from Neisseria meningitidis serogroup C / serotype 2a (strain ATCC 700532 / DSM 15464 / FAM18).